A 272-amino-acid polypeptide reads, in one-letter code: NH(3)-dependent NAD(+) synthetase (272 aa).

An ATP-binding site is contributed by 45–52 (GISGGQDS). D51 is a Mg(2+) binding site. Position 138 (R138) interacts with deamido-NAD(+). T158 lines the ATP pocket. Position 163 (E163) interacts with Mg(2+). The deamido-NAD(+) site is built by K171 and D178. ATP is bound by residues K187 and T209. A deamido-NAD(+)-binding site is contributed by 258–259 (HK).

It belongs to the NAD synthetase family. In terms of assembly, homodimer.

It catalyses the reaction deamido-NAD(+) + NH4(+) + ATP = AMP + diphosphate + NAD(+) + H(+). Its pathway is cofactor biosynthesis; NAD(+) biosynthesis; NAD(+) from deamido-NAD(+) (ammonia route): step 1/1. Catalyzes the ATP-dependent amidation of deamido-NAD to form NAD. Uses ammonia as a nitrogen source. The sequence is that of NH(3)-dependent NAD(+) synthetase from Bacillus cereus (strain Q1).